A 353-amino-acid polypeptide reads, in one-letter code: Mitochondrial distribution and morphology protein 10 (353 aa).

Belongs to the MDM10 family. In terms of assembly, component of the ER-mitochondria encounter structure (ERMES) or MDM complex, composed of MMM1, MDM10, MDM12 and MDM34. Associates with the mitochondrial outer membrane sorting assembly machinery SAM(core) complex.

The protein resides in the mitochondrion outer membrane. Component of the ERMES/MDM complex, which serves as a molecular tether to connect the endoplasmic reticulum and mitochondria. Components of this complex are involved in the control of mitochondrial shape and protein biogenesis and may function in phospholipid exchange. MDM10 is involved in the late assembly steps of the general translocase of the mitochondrial outer membrane (TOM complex). Functions in the TOM40-specific route of the assembly of outer membrane beta-barrel proteins, including the association of TOM40 with the receptor TOM22 and small TOM proteins. Can associate with the SAM(core) complex as well as the MDM12-MMM1 complex, both involved in late steps of the major beta-barrel assembly pathway, that is responsible for biogenesis of all outer membrane beta-barrel proteins. May act as a switch that shuttles between both complexes and channels precursor proteins into the TOM40-specific pathway. Plays a role in mitochondrial morphology and in the inheritance of mitochondria. This Yarrowia lipolytica (strain CLIB 122 / E 150) (Yeast) protein is Mitochondrial distribution and morphology protein 10.